The sequence spans 294 residues: NAD kinase (294 aa).

D74 functions as the Proton acceptor in the catalytic mechanism. NAD(+) contacts are provided by residues D74–G75, N148–E149, H159, R176, D178, T189–S194, and Q249.

It belongs to the NAD kinase family. A divalent metal cation serves as cofactor.

The protein localises to the cytoplasm. It catalyses the reaction NAD(+) + ATP = ADP + NADP(+) + H(+). Functionally, involved in the regulation of the intracellular balance of NAD and NADP, and is a key enzyme in the biosynthesis of NADP. Catalyzes specifically the phosphorylation on 2'-hydroxyl of the adenosine moiety of NAD to yield NADP. The chain is NAD kinase from Vibrio vulnificus (strain CMCP6).